Here is a 300-residue protein sequence, read N- to C-terminus: Porphobilinogen deaminase (300 aa).

Position 242 is an S-(dipyrrolylmethanemethyl)cysteine (C242).

It belongs to the HMBS family. In terms of assembly, monomer. It depends on dipyrromethane as a cofactor.

The enzyme catalyses 4 porphobilinogen + H2O = hydroxymethylbilane + 4 NH4(+). It participates in porphyrin-containing compound metabolism; protoporphyrin-IX biosynthesis; coproporphyrinogen-III from 5-aminolevulinate: step 2/4. Functionally, tetrapolymerization of the monopyrrole PBG into the hydroxymethylbilane pre-uroporphyrinogen in several discrete steps. The chain is Porphobilinogen deaminase from Blochmanniella pennsylvanica (strain BPEN).